The following is an 85-amino-acid chain: ATP synthase subunit c (85 aa).

Helical transmembrane passes span 10-30 (IAVALLIGLGALGTAIGFGLL) and 53-73 (FIVAGLLDAVTMIGVGIALFF).

Belongs to the ATPase C chain family. As to quaternary structure, F-type ATPases have 2 components, F(1) - the catalytic core - and F(0) - the membrane proton channel. F(1) has five subunits: alpha(3), beta(3), gamma(1), delta(1), epsilon(1). F(0) has three main subunits: a(1), b(2) and c(10-14). The alpha and beta chains form an alternating ring which encloses part of the gamma chain. F(1) is attached to F(0) by a central stalk formed by the gamma and epsilon chains, while a peripheral stalk is formed by the delta and b chains.

Its subcellular location is the cell inner membrane. Its function is as follows. F(1)F(0) ATP synthase produces ATP from ADP in the presence of a proton or sodium gradient. F-type ATPases consist of two structural domains, F(1) containing the extramembraneous catalytic core and F(0) containing the membrane proton channel, linked together by a central stalk and a peripheral stalk. During catalysis, ATP synthesis in the catalytic domain of F(1) is coupled via a rotary mechanism of the central stalk subunits to proton translocation. Functionally, key component of the F(0) channel; it plays a direct role in translocation across the membrane. A homomeric c-ring of between 10-14 subunits forms the central stalk rotor element with the F(1) delta and epsilon subunits. This is ATP synthase subunit c from Pseudomonas aeruginosa (strain LESB58).